The chain runs to 259 residues: 5'-nucleotidase SurE (259 aa).

Asp8, Asp9, Ser40, and Asn92 together coordinate a divalent metal cation.

The protein belongs to the SurE nucleotidase family. A divalent metal cation is required as a cofactor.

It localises to the cytoplasm. The enzyme catalyses a ribonucleoside 5'-phosphate + H2O = a ribonucleoside + phosphate. In terms of biological role, nucleotidase that shows phosphatase activity on nucleoside 5'-monophosphates. This is 5'-nucleotidase SurE from Stenotrophomonas maltophilia (strain R551-3).